A 605-amino-acid polypeptide reads, in one-letter code: Isocitrate dehydrogenase kinase/phosphatase (605 aa).

Residues 327-333 (APGIKGL) and Lys348 contribute to the ATP site. The active site involves Asp383.

The protein belongs to the AceK family.

The protein resides in the cytoplasm. It carries out the reaction L-seryl-[isocitrate dehydrogenase] + ATP = O-phospho-L-seryl-[isocitrate dehydrogenase] + ADP + H(+). In terms of biological role, bifunctional enzyme which can phosphorylate or dephosphorylate isocitrate dehydrogenase (IDH) on a specific serine residue. This is a regulatory mechanism which enables bacteria to bypass the Krebs cycle via the glyoxylate shunt in response to the source of carbon. When bacteria are grown on glucose, IDH is fully active and unphosphorylated, but when grown on acetate or ethanol, the activity of IDH declines drastically concomitant with its phosphorylation. The sequence is that of Isocitrate dehydrogenase kinase/phosphatase from Burkholderia orbicola (strain MC0-3).